The chain runs to 1091 residues: Error-prone DNA polymerase (1091 aa).

Positions 1–51 (MGWSNGPPSWAEMERVLNGKPRHAGVPAFDADGDVPRSRKRGAYQPPGRER) are disordered.

The protein belongs to the DNA polymerase type-C family. DnaE2 subfamily.

It localises to the cytoplasm. The enzyme catalyses DNA(n) + a 2'-deoxyribonucleoside 5'-triphosphate = DNA(n+1) + diphosphate. Functionally, DNA polymerase involved in damage-induced mutagenesis and translesion synthesis (TLS). It is not the major replicative DNA polymerase. This Mycobacterium bovis (strain ATCC BAA-935 / AF2122/97) protein is Error-prone DNA polymerase.